Consider the following 137-residue polypeptide: Hydrogenase maturation factor HypA (137 aa).

A Ni(2+)-binding site is contributed by H2. Zn(2+) contacts are provided by C73, C75, C105, and C108.

The protein belongs to the HypA/HybF family.

In terms of biological role, involved in the maturation of [NiFe] hydrogenases. Required for nickel insertion into the metal center of the hydrogenase. The chain is Hydrogenase maturation factor HypA from Methanosarcina mazei (strain ATCC BAA-159 / DSM 3647 / Goe1 / Go1 / JCM 11833 / OCM 88) (Methanosarcina frisia).